The primary structure comprises 230 residues: ATP synthase subunit a (230 aa).

5 helical membrane-spanning segments follow: residues leucine 17–alanine 37, isoleucine 78–isoleucine 98, aspartate 107–isoleucine 127, leucine 165–valine 187, and glutamate 198–isoleucine 218.

It belongs to the ATPase A chain family. F-type ATPases have 2 components, CF(1) - the catalytic core - and CF(0) - the membrane proton channel. CF(1) has five subunits: alpha(3), beta(3), gamma(1), delta(1), epsilon(1). CF(0) has three main subunits: a(1), b(2) and c(9-12). The alpha and beta chains form an alternating ring which encloses part of the gamma chain. CF(1) is attached to CF(0) by a central stalk formed by the gamma and epsilon chains, while a peripheral stalk is formed by the delta and b chains.

The protein resides in the cell inner membrane. Key component of the proton channel; it plays a direct role in the translocation of protons across the membrane. The polypeptide is ATP synthase subunit a (Legionella pneumophila (strain Corby)).